A 152-amino-acid polypeptide reads, in one-letter code: MAAFIAKQMVGDQLKSVKAMGGDEGEKEGNENAEEEAAAIEEARREAEERRKEKHRKMEEEREEMRQTIRDKYGLKKKVKEEPEAEADLDEGRVGRKKKTKEELAAEANEEEDDDEFAKFPTDLSDLTTKVSELPQKMAASVGEVTEKCSLQ.

The disordered stretch occupies residues methionine 1–lysine 119. Residues aspartate 23 to alanine 39 are compositionally biased toward acidic residues. Basic and acidic residues-rich tracts occupy residues glutamate 41 to glutamate 82 and aspartate 90 to leucine 104. The interval glutamate 59–leucine 75 is interaction with the SNARE complex. Cysteine 149 bears the Cysteine methyl ester mark. Cysteine 149 is lipidated: S-farnesyl cysteine. Positions serine 150–glutamine 152 are cleaved as a propeptide — removed in mature form.

Belongs to the complexin/synaphin family. As to quaternary structure, binds to the SNARE core complex containing SNAP25, synaptobrevin and syntaxin-1.

It localises to the membrane. The protein resides in the cytoplasm. Its subcellular location is the cytosol. Its function is as follows. Positively regulates a late step in synaptic vesicle exocytosis. The sequence is that of Complexin (cpx) from Doryteuthis pealeii (Longfin inshore squid).